We begin with the raw amino-acid sequence, 161 residues long: Nucleotide-binding protein Swoo_3646 (161 aa).

It belongs to the YajQ family.

Nucleotide-binding protein. This is Nucleotide-binding protein Swoo_3646 from Shewanella woodyi (strain ATCC 51908 / MS32).